Here is a 245-residue protein sequence, read N- to C-terminus: 2,3-bisphosphoglycerate-dependent phosphoglycerate mutase 1 (245 aa).

Substrate-binding positions include 8-15, 21-22, arginine 60, 87-90, lysine 98, 114-115, and 183-184; these read RHGQSLWN, TG, ERHY, RR, and GN. Histidine 9 functions as the Tele-phosphohistidine intermediate in the catalytic mechanism. Glutamate 87 acts as the Proton donor/acceptor in catalysis.

Belongs to the phosphoglycerate mutase family. BPG-dependent PGAM subfamily.

The catalysed reaction is (2R)-2-phosphoglycerate = (2R)-3-phosphoglycerate. The protein operates within carbohydrate degradation; glycolysis; pyruvate from D-glyceraldehyde 3-phosphate: step 3/5. Catalyzes the interconversion of 2-phosphoglycerate and 3-phosphoglycerate. In Bacillus cereus (strain ATCC 10987 / NRS 248), this protein is 2,3-bisphosphoglycerate-dependent phosphoglycerate mutase 1.